The chain runs to 59 residues: Kunitz-type serine protease inhibitor BmKTT-1 (59 aa).

One can recognise a BPTI/Kunitz inhibitor domain in the interval 4 to 54; it reads CSLPVDTGRGKGWFLRYYYNKNSKTCESFIYGGVGGNKNNFLNIENCCKIC. Intrachain disulfides connect Cys-4/Cys-54, Cys-29/Cys-50, and Cys-51/Cys-59.

This sequence belongs to the venom Kunitz-type family. Scorpion delta-Ktx subfamily. Delta-Ktx 2 sub-subfamily. As to expression, expressed by the venom gland.

The protein localises to the secreted. In terms of biological role, dual-function toxin that completely inhibits trypsin activity at a molar ratio of 1:1 (Ki=136 nM) and that inhibits mKv1.3/KCNA3 potassium channel currents (IC(50)=129.7 nM). In Olivierus martensii (Manchurian scorpion), this protein is Kunitz-type serine protease inhibitor BmKTT-1.